The following is a 796-amino-acid chain: Kinesin-like protein KIF3C (796 aa).

Positions 10-367 constitute a Kinesin motor domain; sequence ALKVVARCRP…LRFANRAKNI (358 aa). Position 97–104 (97–104) interacts with ATP; that stretch reads GQTGTGKT. 3 disordered regions span residues 251-292, 397-421, and 754-796; these read ERQN…PKEA, EKKG…SAPA, and PSTS…VDHD. Residues 270–284 are compositionally biased toward gly residues; the sequence is AGGGGGGGGTSGSGS. The stretch at 378-632 forms a coiled coil; sequence KDTLLREFQE…NEQTRELKLK (255 aa). Residues 401 to 416 are compositionally biased toward basic residues; the sequence is MLGKRPRRKSSRRKKA. The globular stretch occupies residues 633-793; that stretch reads YLIIENFIPP…SAPLHPATVV (161 aa).

Belongs to the TRAFAC class myosin-kinesin ATPase superfamily. Kinesin family. Kinesin II subfamily. As to quaternary structure, heterodimer of KIF3A and KIF3C.

It localises to the cytoplasm. The protein resides in the cytoskeleton. In terms of biological role, microtubule-based anterograde translocator for membranous organelles. In Rattus norvegicus (Rat), this protein is Kinesin-like protein KIF3C (Kif3c).